The sequence spans 71 residues: MPAVKVKENEPFDVALRRFKRSCEKAGVLAEVRSREFYEKPTAERKRKAAAAVKRHAKKVQREQRRRERLY.

Residues 48 to 59 (KAAAAVKRHAKK) are compositionally biased toward basic residues. Positions 48–71 (KAAAAVKRHAKKVQREQRRRERLY) are disordered. Residues 60–71 (VQREQRRRERLY) are compositionally biased toward basic and acidic residues.

The protein belongs to the bacterial ribosomal protein bS21 family.

The protein is Small ribosomal subunit protein bS21 of Azotobacter vinelandii (strain DJ / ATCC BAA-1303).